A 181-amino-acid polypeptide reads, in one-letter code: MSSFHATTIFAVQHNGKSAMAGDGQVTFGQAVVMKHTARKVRKLFNGKVIAGFAGSVADAFTLFEMFEAKLEEYNGNLQRAAVELAKEWRSDKVLRKLEAMLIVMNADSMLLVSGTGEVIEPDDGILAIGSGGNYALAAGRALKRHAGSQLDAKAIARASLETAGEICVYTNDQIIVEELE.

Residue Ser2 is part of the active site. Na(+) is bound by residues Gly165, Cys168, and Thr171.

The protein belongs to the peptidase T1B family. HslV subfamily. A double ring-shaped homohexamer of ClpQ is capped on each side by a ring-shaped ClpY homohexamer. The assembly of the ClpQ/ClpY complex is dependent on binding of ATP.

The protein resides in the cytoplasm. Its function is as follows. Protease subunit of a proteasome-like degradation complex. This is ATP-dependent protease subunit ClpQ (clpQ) from Bacillus licheniformis (strain ATCC 14580 / DSM 13 / JCM 2505 / CCUG 7422 / NBRC 12200 / NCIMB 9375 / NCTC 10341 / NRRL NRS-1264 / Gibson 46).